A 219-amino-acid polypeptide reads, in one-letter code: Cytidylate kinase (219 aa).

Glycine 21–threonine 29 is a binding site for ATP.

The protein belongs to the cytidylate kinase family. Type 1 subfamily.

The protein resides in the cytoplasm. It carries out the reaction CMP + ATP = CDP + ADP. The catalysed reaction is dCMP + ATP = dCDP + ADP. This is Cytidylate kinase from Rickettsia typhi (strain ATCC VR-144 / Wilmington).